The primary structure comprises 493 residues: MRGFGPGLTARRLLPLRLPPRPPGPRLASGQAAGALERAMDELLRRAVPPTPAYELREKTPAPAEGQCADFVSFYGGLAETAQRAELLGRLARGFGVDHGQVAEQSAGVLHLRQQQREAAVLLQAEDRLRYALVPRYRGLFHHISKLDGGVRFLVQLRADLLEAQALKLVEGPDVREMNGVLKGMLSEWFSSGFLNLERVTWHSPCEVLQKISEAEAVHPVKNWMDMKRRVGPYRRCYFFSHCSTPGEPLVVLHVALTGDISSNIQAIVKEHPPSETEEKNKITAAIFYSISLTQQGLQGVELGTFLIKRVVKELQREFPHLGVFSSLSPIPGFTKWLLGLLNSQTKEHGRNELFTDSECKEISEITGGPINETLKLLLSSSEWVQSEKLVRALQTPLMRLCAWYLYGEKHRGYALNPVANFHLQNGAVLWRINWMADVSLRGITGSCGLMANYRYFLEETGPNSTSYLGSKIIKASEQVLSLVAQFQKNSKL.

Residues 1–39 (MRGFGPGLTARRLLPLRLPPRPPGPRLASGQAAGALERA) constitute a mitochondrion transit peptide. The tract at residues 40-190 (MDELLRRAVP…VLKGMLSEWF (151 aa)) is alpha-helical domain. Lys-59 bears the N6-acetyllysine mark. Lys-168 bears the N6-acetyllysine; alternate mark. Lys-168 carries the N6-succinyllysine; alternate modification. Residues 191–493 (SSGFLNLERV…VAQFQKNSKL (303 aa)) are catalytic domain. Lys-211 carries the post-translational modification N6-acetyllysine. Lys-222 carries the N6-succinyllysine modification. Malonyl-CoA-binding positions include 299-305 (QGVELGT) and Ser-329. The active-site Proton acceptor is the Ser-329. Lys-389 bears the N6-acetyllysine mark. His-423 is a binding site for malonyl-CoA. His-423 (proton donor) is an active-site residue. Lys-472 is modified (N6-acetyllysine). Positions 491–493 (SKL) match the Microbody targeting signal motif.

In terms of assembly, homotetramer. Dimer of dimers. The two subunits within a dimer display conformational differences suggesting that at any given moment, only one of the two subunits is competent for malonyl-CoA binding and catalytic activity. Under oxidizing conditions, can form disulfide-linked homotetramers (in vitro). Associates with the peroxisomal targeting signal receptor PEX5. In terms of processing, acetylation at Lys-472 activates malonyl-CoA decarboxylase activity. Deacetylation at Lys-472 by SIRT4 represses activity, leading to promote lipogenesis. Post-translationally, interchain disulfide bonds may form in peroxisomes (Potential). Interchain disulfide bonds are not expected to form in the reducing environment of the cytoplasm and mitochondria. Expressed in fibroblasts and hepatoblastoma cells (at protein level). Expressed strongly in heart, liver, skeletal muscle, kidney and pancreas. Expressed in myotubes. Expressed weakly in brain, placenta, spleen, thymus, testis, ovary and small intestine.

Its subcellular location is the cytoplasm. It is found in the mitochondrion matrix. The protein localises to the peroxisome. It localises to the peroxisome matrix. It carries out the reaction malonyl-CoA + H(+) = acetyl-CoA + CO2. The protein operates within metabolic intermediate biosynthesis; acetyl-CoA biosynthesis; acetyl-CoA from malonyl-CoA: step 1/1. Its activity is regulated as follows. Malonyl-CoA decarboxylase activity does not require any cofactors or divalent metal ions. Formation of interchain disulfide bonds leads to positive cooperativity between active sites and increases the affinity for malonyl-CoA and the catalytic efficiency (in vitro). In terms of biological role, catalyzes the conversion of malonyl-CoA to acetyl-CoA. In the fatty acid biosynthesis MCD selectively removes malonyl-CoA and thus assures that methyl-malonyl-CoA is the only chain elongating substrate for fatty acid synthase and that fatty acids with multiple methyl side chains are produced. In peroxisomes it may be involved in degrading intraperoxisomal malonyl-CoA, which is generated by the peroxisomal beta-oxidation of odd chain-length dicarboxylic fatty acids. Plays a role in the metabolic balance between glucose and lipid oxidation in muscle independent of alterations in insulin signaling. May play a role in controlling the extent of ischemic injury by promoting glucose oxidation. The sequence is that of Malonyl-CoA decarboxylase, mitochondrial from Homo sapiens (Human).